The following is a 364-amino-acid chain: Chorismate synthase (364 aa).

Arginine 47 is a binding site for NADP(+). Residues 125–127, glycine 288, 303–307, and arginine 329 contribute to the FMN site; these read RAS and KPTAT.

It belongs to the chorismate synthase family. As to quaternary structure, homotetramer. FMNH2 is required as a cofactor.

It carries out the reaction 5-O-(1-carboxyvinyl)-3-phosphoshikimate = chorismate + phosphate. It participates in metabolic intermediate biosynthesis; chorismate biosynthesis; chorismate from D-erythrose 4-phosphate and phosphoenolpyruvate: step 7/7. In terms of biological role, catalyzes the anti-1,4-elimination of the C-3 phosphate and the C-6 proR hydrogen from 5-enolpyruvylshikimate-3-phosphate (EPSP) to yield chorismate, which is the branch point compound that serves as the starting substrate for the three terminal pathways of aromatic amino acid biosynthesis. This reaction introduces a second double bond into the aromatic ring system. This chain is Chorismate synthase, found in Synechococcus sp. (strain CC9902).